Consider the following 857-residue polypeptide: Protein dalmatian (857 aa).

2 disordered regions span residues 1–50 and 146–194; these read MVRT…KLSI and VQKS…FFHR. 2 stretches are compositionally biased toward polar residues: residues 146–156 and 165–176; these read VQKSTQPQNIK and SPCQQRIRSKSP. A phosphoserine mark is found at Ser-173, Ser-175, Ser-184, and Ser-222. Residues 251–271 show a composition bias toward basic residues; the sequence is GKPRAKRTAKKVRPVGNRRKV. Residues 251–281 are disordered; that stretch reads GKPRAKRTAKKVRPVGNRRKVSTKDNEPEPV. At Ser-405 the chain carries Phosphoserine. Disordered regions lie at residues 470 to 514 and 737 to 830; these read SICP…NAEN and PPRP…RDIE. Positions 771-781 are enriched in basic and acidic residues; that stretch reads KQPRRTYVKER. Over residues 797 to 806 the composition is skewed to acidic residues; the sequence is SESEDEDEQD. The segment covering 807–816 has biased composition (basic and acidic residues); that stretch reads SHDKSLDSPE. The span at 817–826 shows a compositional bias: basic residues; sequence KKRHHVKRPR.

It is found in the nucleus. It localises to the chromosome. Functionally, regulator of sister chromatid cohesion in mitosis. Probably involved in development of the central nervous system. This Drosophila melanogaster (Fruit fly) protein is Protein dalmatian (dmt).